Here is a 60-residue protein sequence, read N- to C-terminus: Large ribosomal subunit protein uL30 (60 aa).

This sequence belongs to the universal ribosomal protein uL30 family. Part of the 50S ribosomal subunit.

The polypeptide is Large ribosomal subunit protein uL30 (Streptomyces griseus subsp. griseus (strain JCM 4626 / CBS 651.72 / NBRC 13350 / KCC S-0626 / ISP 5235)).